The following is a 158-amino-acid chain: NAD(P)H-quinone oxidoreductase subunit N (158 aa).

The protein belongs to the complex I NdhN subunit family. In terms of assembly, NDH-1 can be composed of about 15 different subunits; different subcomplexes with different compositions have been identified which probably have different functions.

It localises to the cellular thylakoid membrane. It carries out the reaction a plastoquinone + NADH + (n+1) H(+)(in) = a plastoquinol + NAD(+) + n H(+)(out). The catalysed reaction is a plastoquinone + NADPH + (n+1) H(+)(in) = a plastoquinol + NADP(+) + n H(+)(out). In terms of biological role, NDH-1 shuttles electrons from an unknown electron donor, via FMN and iron-sulfur (Fe-S) centers, to quinones in the respiratory and/or the photosynthetic chain. The immediate electron acceptor for the enzyme in this species is believed to be plastoquinone. Couples the redox reaction to proton translocation, and thus conserves the redox energy in a proton gradient. Cyanobacterial NDH-1 also plays a role in inorganic carbon-concentration. This chain is NAD(P)H-quinone oxidoreductase subunit N, found in Prochlorococcus marinus (strain AS9601).